The chain runs to 243 residues: Transmembrane protein 176A (243 aa).

At serine 42 the chain carries Phosphoserine. 4 consecutive transmembrane segments (helical) span residues 65–85, 92–112, 122–142, and 204–224; these read WVVQIVLGILSVVLGGILYIC, TQGAPFWTGIVAMLAGAVAFL, ALMRILLVLASFCTAVAAIVI, and LLGVWVLLLLASLIPVCVYLW.

The protein belongs to the TMEM176 family. As to quaternary structure, interacts with MCOLN2.

Its subcellular location is the membrane. In Rattus norvegicus (Rat), this protein is Transmembrane protein 176A (Tmem176a).